The primary structure comprises 387 residues: Dynactin subunit 2 (387 aa).

3 coiled-coil regions span residues 99-125 (LQRC…DTGR), 256-282 (SQLD…SNAT), and 355-387 (TGVQ…QMIK).

Belongs to the dynactin subunit 2 family. As to quaternary structure, subunit of dynactin, a multiprotein complex associated with dynein.

Its subcellular location is the cytoplasm. It localises to the cytoskeleton. The protein resides in the membrane. In terms of biological role, modulates cytoplasmic dynein binding to an organelle, and plays a role in prometaphase chromosome alignment and spindle organization during mitosis. This is Dynactin subunit 2 from Anopheles gambiae (African malaria mosquito).